Consider the following 144-residue polypeptide: Protein CT_635 (144 aa).

The tract at residues 110 to 144 is disordered; the sequence is EVTNDIGHSSHKSPTPKKTKSSSQKKSKKKNWIPL. Residues 118–144 show a composition bias toward basic residues; the sequence is SSHKSPTPKKTKSSSQKKSKKKNWIPL.

Belongs to the chlamydial CPn_0742/CT_635/TC_0003 family.

The sequence is that of Protein CT_635 from Chlamydia trachomatis serovar D (strain ATCC VR-885 / DSM 19411 / UW-3/Cx).